Consider the following 385-residue polypeptide: Deoxyguanosinetriphosphate triphosphohydrolase-like protein (385 aa).

Residues 75–204 form the HD domain; the sequence is RLTHSLEVAQ…INFADEIAYN (130 aa).

The protein belongs to the dGTPase family. Type 2 subfamily.

The sequence is that of Deoxyguanosinetriphosphate triphosphohydrolase-like protein from Geobacter sulfurreducens (strain ATCC 51573 / DSM 12127 / PCA).